A 694-amino-acid polypeptide reads, in one-letter code: Elongation factor G (694 aa).

The tr-type G domain occupies 6–288 (KLYRNIGIAA…GVIEYLPSPT (283 aa)). Residues 15–22 (AHVDAGKT), 86–90 (DTPGH), and 140–143 (NKMD) each bind GTP.

It belongs to the TRAFAC class translation factor GTPase superfamily. Classic translation factor GTPase family. EF-G/EF-2 subfamily.

It is found in the cytoplasm. Functionally, catalyzes the GTP-dependent ribosomal translocation step during translation elongation. During this step, the ribosome changes from the pre-translocational (PRE) to the post-translocational (POST) state as the newly formed A-site-bound peptidyl-tRNA and P-site-bound deacylated tRNA move to the P and E sites, respectively. Catalyzes the coordinated movement of the two tRNA molecules, the mRNA and conformational changes in the ribosome. In Legionella pneumophila (strain Lens), this protein is Elongation factor G.